The sequence spans 438 residues: Thymidine phosphorylase (438 aa).

The protein belongs to the thymidine/pyrimidine-nucleoside phosphorylase family. In terms of assembly, homodimer.

The catalysed reaction is thymidine + phosphate = 2-deoxy-alpha-D-ribose 1-phosphate + thymine. Its pathway is pyrimidine metabolism; dTMP biosynthesis via salvage pathway; dTMP from thymine: step 1/2. The enzymes which catalyze the reversible phosphorolysis of pyrimidine nucleosides are involved in the degradation of these compounds and in their utilization as carbon and energy sources, or in the rescue of pyrimidine bases for nucleotide synthesis. The protein is Thymidine phosphorylase of Agrobacterium fabrum (strain C58 / ATCC 33970) (Agrobacterium tumefaciens (strain C58)).